A 466-amino-acid polypeptide reads, in one-letter code: Cysteine--tRNA ligase (466 aa).

Residue Cys-29 participates in Zn(2+) binding. Residues 31-41 (ATVQAPPHIGH) carry the 'HIGH' region motif. The Zn(2+) site is built by Cys-211, His-236, and Glu-240. Positions 267–271 (KMSKS) match the 'KMSKS' region motif. Lys-270 is an ATP binding site.

This sequence belongs to the class-I aminoacyl-tRNA synthetase family. Monomer. It depends on Zn(2+) as a cofactor.

It localises to the cytoplasm. The catalysed reaction is tRNA(Cys) + L-cysteine + ATP = L-cysteinyl-tRNA(Cys) + AMP + diphosphate. In Thermobifida fusca (strain YX), this protein is Cysteine--tRNA ligase.